We begin with the raw amino-acid sequence, 464 residues long: ATP synthase subunit beta (464 aa).

Residue 153 to 160 coordinates ATP; it reads GGAGVGKT.

The protein belongs to the ATPase alpha/beta chains family. F-type ATPases have 2 components, CF(1) - the catalytic core - and CF(0) - the membrane proton channel. CF(1) has five subunits: alpha(3), beta(3), gamma(1), delta(1), epsilon(1). CF(0) has three main subunits: a(1), b(2) and c(9-12). The alpha and beta chains form an alternating ring which encloses part of the gamma chain. CF(1) is attached to CF(0) by a central stalk formed by the gamma and epsilon chains, while a peripheral stalk is formed by the delta and b chains.

Its subcellular location is the cell inner membrane. It catalyses the reaction ATP + H2O + 4 H(+)(in) = ADP + phosphate + 5 H(+)(out). In terms of biological role, produces ATP from ADP in the presence of a proton gradient across the membrane. The catalytic sites are hosted primarily by the beta subunits. This is ATP synthase subunit beta from Burkholderia lata (strain ATCC 17760 / DSM 23089 / LMG 22485 / NCIMB 9086 / R18194 / 383).